The chain runs to 382 residues: Alpha-2B adrenergic receptor (382 aa).

The chain crosses the membrane as a helical span at residues 1–25; it reads AIAAVITFLILFTIFGNALVILAVL. Over 26–36 the chain is Cytoplasmic; sequence TSRSLRAPQNL. Residues 37–62 form a helical membrane-spanning segment; sequence FLVSLAAADILVATLIIPFSLANELL. The Extracellular segment spans residues 63–72; it reads GYWYFRHTWC. A disulfide bond links cysteine 72 and cysteine 151. The chain crosses the membrane as a helical span at residues 73–95; it reads EVYLALDVLFCTSSIVHLCAISL. Over 96–117 the chain is Cytoplasmic; that stretch reads DRYWSVSRALEYNSKRTPRRIK. The chain crosses the membrane as a helical span at residues 118-140; sequence GIILTVWLIAAFISLPPLIYKGD. At 141 to 156 the chain is on the extracellular side; the sequence is KGKKPGGRPQCKLNEE. The helical transmembrane segment at 157-180 threads the bilayer; that stretch reads AWYILSSSIGSFFAPCLIMILVYL. Residues 181–346 are Cytoplasmic-facing; that stretch reads RIYLIAKRRN…MNREKRFTFV (166 aa). A disordered region spans residues 192 to 305; it reads QGPHGKQAPG…QGTPNFQPSQ (114 aa). The span at 271–284 shows a compositional bias: acidic residues; sequence EEEEEEEEEEEEEC. The span at 291 to 305 shows a compositional bias: polar residues; the sequence is TSSSLQGTPNFQPSQ. The chain crosses the membrane as a helical span at residues 347–370; it reads LAVVIGVFVLCWFPFFFSYSLGAI. Residues 371–379 lie on the Extracellular side of the membrane; it reads CPQHCKVPH. Residues 380-382 traverse the membrane as a helical segment; it reads GLF.

The protein belongs to the G-protein coupled receptor 1 family. Adrenergic receptor subfamily. ADRA2B sub-subfamily. Interacts with RAB26. Interacts with PPP1R9B. Interacts with GGA1, GGA2 and GGA3.

It localises to the cell membrane. Alpha-2 adrenergic receptors mediate the catecholamine-induced inhibition of adenylate cyclase through the action of G proteins. This chain is Alpha-2B adrenergic receptor (ADRA2B), found in Didelphis virginiana (North American opossum).